A 130-amino-acid chain; its full sequence is Small ribosomal subunit protein uS9 (130 aa).

Belongs to the universal ribosomal protein uS9 family.

The chain is Small ribosomal subunit protein uS9 from Shewanella halifaxensis (strain HAW-EB4).